A 197-amino-acid chain; its full sequence is UPF0056 inner membrane protein YhgN (197 aa).

Over 1–3 the chain is Periplasmic; the sequence is MNE. A helical transmembrane segment spans residues 4 to 24; that stretch reads IISAAVLLILIMDPLGNLPIF. The Cytoplasmic portion of the chain corresponds to 25-44; it reads MSVLKHTEPKRRRAIMVREL. Residues 45-65 traverse the membrane as a helical segment; it reads LIALLVMLVFLFAGEKILAFL. At 66-71 the chain is on the periplasmic side; the sequence is SLRAET. The helical transmembrane segment at 72–92 threads the bilayer; it reads VSISGGIILFLIAIKMIFPSA. The Cytoplasmic segment spans residues 93–105; it reads SGNSSGLPAGEEP. A helical transmembrane segment spans residues 106–126; sequence FIVPLAIPLVAGPTILATLML. The Periplasmic portion of the chain corresponds to 127-138; sequence LSHQYPNQMGHL. A helical transmembrane segment spans residues 139 to 159; that stretch reads VIALLLAWGGTFVILLQSSLF. The Cytoplasmic segment spans residues 160-173; the sequence is LRLLGEKGVNALER. Residues 174–194 form a helical membrane-spanning segment; sequence LMGLILVMMATQMFLDGIRMW. The Periplasmic portion of the chain corresponds to 195–197; it reads MKG.

The protein belongs to the UPF0056 (MarC) family.

It localises to the cell inner membrane. The polypeptide is UPF0056 inner membrane protein YhgN (yhgN) (Escherichia coli O157:H7).